Reading from the N-terminus, the 460-residue chain is ATP synthase subunit beta (460 aa).

G149–T156 lines the ATP pocket.

This sequence belongs to the ATPase alpha/beta chains family. In terms of assembly, F-type ATPases have 2 components, CF(1) - the catalytic core - and CF(0) - the membrane proton channel. CF(1) has five subunits: alpha(3), beta(3), gamma(1), delta(1), epsilon(1). CF(0) has three main subunits: a(1), b(2) and c(9-12). The alpha and beta chains form an alternating ring which encloses part of the gamma chain. CF(1) is attached to CF(0) by a central stalk formed by the gamma and epsilon chains, while a peripheral stalk is formed by the delta and b chains.

Its subcellular location is the cell membrane. It carries out the reaction ATP + H2O + 4 H(+)(in) = ADP + phosphate + 5 H(+)(out). In terms of biological role, produces ATP from ADP in the presence of a proton gradient across the membrane. The catalytic sites are hosted primarily by the beta subunits. This Acholeplasma laidlawii (strain PG-8A) protein is ATP synthase subunit beta.